Reading from the N-terminus, the 70-residue chain is Small ribosomal subunit protein bS21A (70 aa).

Belongs to the bacterial ribosomal protein bS21 family.

The sequence is that of Small ribosomal subunit protein bS21A from Burkholderia orbicola (strain AU 1054).